We begin with the raw amino-acid sequence, 443 residues long: Tubulin beta-2 chain (443 aa).

The MREI motif signature appears at 1-4; that stretch reads MREI. GTP contacts are provided by Q11, E69, S138, G142, T143, G144, N204, and N226. Mg(2+) is bound at residue E69. E438 is subject to 5-glutamyl polyglutamate.

The protein belongs to the tubulin family. As to quaternary structure, dimer of alpha and beta chains. A typical microtubule is a hollow water-filled tube with an outer diameter of 25 nm and an inner diameter of 15 nM. Alpha-beta heterodimers associate head-to-tail to form protofilaments running lengthwise along the microtubule wall with the beta-tubulin subunit facing the microtubule plus end conferring a structural polarity. Microtubules usually have 13 protofilaments but different protofilament numbers can be found in some organisms and specialized cells. Mg(2+) serves as cofactor. In terms of processing, some glutamate residues at the C-terminus are polyglycylated, resulting in polyglycine chains on the gamma-carboxyl group. Glycylation is mainly limited to tubulin incorporated into axonemes (cilia and flagella) whereas glutamylation is prevalent in neuronal cells, centrioles, axonemes, and the mitotic spindle. Both modifications can coexist on the same protein on adjacent residues, and lowering polyglycylation levels increases polyglutamylation, and reciprocally. The precise function of polyglycylation is still unclear. Post-translationally, some glutamate residues at the C-terminus are polyglutamylated, resulting in polyglutamate chains on the gamma-carboxyl group. Polyglutamylation plays a key role in microtubule severing by spastin (SPAST). SPAST preferentially recognizes and acts on microtubules decorated with short polyglutamate tails: severing activity by SPAST increases as the number of glutamates per tubulin rises from one to eight, but decreases beyond this glutamylation threshold. As to expression, nervous system specific.

It is found in the cytoplasm. It localises to the cytoskeleton. Functionally, tubulin is the major constituent of microtubules, a cylinder consisting of laterally associated linear protofilaments composed of alpha- and beta-tubulin heterodimers. Microtubules grow by the addition of GTP-tubulin dimers to the microtubule end, where a stabilizing cap forms. Below the cap, tubulin dimers are in GDP-bound state, owing to GTPase activity of alpha-tubulin. In Xenopus laevis (African clawed frog), this protein is Tubulin beta-2 chain (tubb2).